Reading from the N-terminus, the 194-residue chain is Large ribosomal subunit protein eL15 (194 aa).

A disordered region spans residues A158 to K194.

It belongs to the eukaryotic ribosomal protein eL15 family.

The polypeptide is Large ribosomal subunit protein eL15 (Methanococcus maripaludis (strain DSM 14266 / JCM 13030 / NBRC 101832 / S2 / LL)).